Consider the following 630-residue polypeptide: MKKFSLISDYDVYLFKEGTHTRLYDKLGSHVIELNGKRYTFFAVWAPHADYVSLIGDFNEWDKGSTPMVKREDGSGIWEVLLEGDLTGSKYKYFIKNGNYEVDKSDPFAFFCEQPPGNASVVWKLNYRWNDSEYMKKRKRVNSHDSPISIYEVHVGSWRRVPEEGNRFLSYRELAEYLPYYVKEMGFTHVEFLPVMEHPFYGSWGYQITGYFAPTSRYGTPQDFMYLIDKLHQEGIGVILDWVPSHFPTDAHGLAYFDGTHLYEYEDWRKRWHPDWNSFVFDYGKPEVRSFLLSSAHFWLDKYHADGLRVDAVASMLYLDYSRKEWVPNIYGGKENLEAIEFLRKFNESVYRNFPDVQTIAEESTAWPMVSRPTYVGGLGFGMKWNMGWMNDTLFYFSKDPIYRKYHHEVLTFSIWYAFSENFVLPLSHDEVVHGKGSLIGKMPGDYWQKFANLRALFGYMWAHPGKKLLFMGGEFGQFKEWDHETSLDWHLLEYPSHRGIQRLVKDLNEVYRREKALHETDFSPEGFEWVDFHDWEKSVISFLRKDKSGKEIILVVCNFTPVPRYDYRVGVPKGGYWREIMNTDAKEYWGSGMGNLGGKEADKIPWHGRKFSLSLTLPPLSVIYLKHEG.

Aspartate 311 (nucleophile) is an active-site residue. The Proton donor role is filled by glutamate 362.

The protein belongs to the glycosyl hydrolase 13 family. GlgB subfamily. As to quaternary structure, monomer.

It carries out the reaction Transfers a segment of a (1-&gt;4)-alpha-D-glucan chain to a primary hydroxy group in a similar glucan chain.. It participates in glycan biosynthesis; glycogen biosynthesis. In terms of biological role, catalyzes the formation of the alpha-1,6-glucosidic linkages in glycogen by scission of a 1,4-alpha-linked oligosaccharide from growing alpha-1,4-glucan chains and the subsequent attachment of the oligosaccharide to the alpha-1,6 position. This is 1,4-alpha-glucan branching enzyme GlgB from Aquifex aeolicus (strain VF5).